A 253-amino-acid chain; its full sequence is Phosphate import ATP-binding protein PstB (253 aa).

In terms of domain architecture, ABC transporter spans 7 to 248 (IEVEDLNVYF…PRDKRTEDYI (242 aa)). 39 to 46 (GPSGCGKS) lines the ATP pocket.

The protein belongs to the ABC transporter superfamily. Phosphate importer (TC 3.A.1.7) family. As to quaternary structure, the complex is composed of two ATP-binding proteins (PstB), two transmembrane proteins (PstC and PstA) and a solute-binding protein (PstS).

Its subcellular location is the cell membrane. The catalysed reaction is phosphate(out) + ATP + H2O = ADP + 2 phosphate(in) + H(+). Part of the ABC transporter complex PstSACB involved in phosphate import. Responsible for energy coupling to the transport system. This is Phosphate import ATP-binding protein PstB from Methanothermobacter thermautotrophicus (strain ATCC 29096 / DSM 1053 / JCM 10044 / NBRC 100330 / Delta H) (Methanobacterium thermoautotrophicum).